Reading from the N-terminus, the 273-residue chain is Protein N-terminal and lysine N-methyltransferase EFM7 (273 aa).

The tract at residues 1–32 (MSDIEDLASGGLFDEPKDFYKPEEQPGSDSYA) is disordered. The span at 14 to 24 (DEPKDFYKPEE) shows a compositional bias: basic and acidic residues. S-adenosyl-L-methionine contacts are provided by residues Trp-65, 92 to 94 (GAG), Asp-114, Trp-161, and Ser-183.

Belongs to the class I-like SAM-binding methyltransferase superfamily. EFM7 family.

It localises to the cytoplasm. Functionally, S-adenosyl-L-methionine-dependent protein methyltransferase that trimethylates the N-terminal glycine 'Gly-2' of elongation factor 1-alpha, before also catalyzing the mono- and dimethylation of 'Lys-3'. The protein is Protein N-terminal and lysine N-methyltransferase EFM7 of Yarrowia lipolytica (strain CLIB 122 / E 150) (Yeast).